The chain runs to 374 residues: Cobalt-precorrin-5B C(1)-methyltransferase (374 aa).

Belongs to the CbiD family.

The catalysed reaction is Co-precorrin-5B + S-adenosyl-L-methionine = Co-precorrin-6A + S-adenosyl-L-homocysteine. It participates in cofactor biosynthesis; adenosylcobalamin biosynthesis; cob(II)yrinate a,c-diamide from sirohydrochlorin (anaerobic route): step 6/10. Catalyzes the methylation of C-1 in cobalt-precorrin-5B to form cobalt-precorrin-6A. This chain is Cobalt-precorrin-5B C(1)-methyltransferase, found in Synechococcus elongatus (strain ATCC 33912 / PCC 7942 / FACHB-805) (Anacystis nidulans R2).